Here is a 269-residue protein sequence, read N- to C-terminus: MSRLQTRFAQLKEQNRAALVTFVTAGDPGYDTSLAILKGLPAAGADVIELGMPFTDPMADGPAIQLANIRALEAKQNLVKTLQMVREFRKDNNDTPLVLMGYFNPIHKYGVPKFIADAKEAGVDGLIVVDMPPEHNGELCDPAQAAGIDFIRLTTPTTDDVRLPTVLNGSSGFVYYVSVAGVTGAGAATLEHVEEAVTRLRRHTDLPISIGFGIRTPEQAAAIARLADGVVVGSALIDHIANASNDQQAIDGVLSLCAALSEGVRNARK.

Active-site proton acceptor residues include E49 and D60.

This sequence belongs to the TrpA family. Tetramer of two alpha and two beta chains.

It catalyses the reaction (1S,2R)-1-C-(indol-3-yl)glycerol 3-phosphate + L-serine = D-glyceraldehyde 3-phosphate + L-tryptophan + H2O. Its pathway is amino-acid biosynthesis; L-tryptophan biosynthesis; L-tryptophan from chorismate: step 5/5. In terms of biological role, the alpha subunit is responsible for the aldol cleavage of indoleglycerol phosphate to indole and glyceraldehyde 3-phosphate. This Pseudomonas fluorescens (strain SBW25) protein is Tryptophan synthase alpha chain.